The following is a 149-amino-acid chain: Nucleoside diphosphate kinase 1 (149 aa).

Lys-9, Phe-57, Arg-85, Thr-91, Arg-102, and Asn-112 together coordinate ATP. Residue His-115 is the Pros-phosphohistidine intermediate of the active site.

Belongs to the NDK family. As to quaternary structure, homohexamer. Mg(2+) serves as cofactor.

The enzyme catalyses a 2'-deoxyribonucleoside 5'-diphosphate + ATP = a 2'-deoxyribonucleoside 5'-triphosphate + ADP. The catalysed reaction is a ribonucleoside 5'-diphosphate + ATP = a ribonucleoside 5'-triphosphate + ADP. Its function is as follows. Major role in the synthesis of nucleoside triphosphates other than ATP. The ATP gamma phosphate is transferred to the NDP beta phosphate via a ping-pong mechanism, using a phosphorylated active-site intermediate. This NDK is microtubule-associated. The sequence is that of Nucleoside diphosphate kinase 1 (NDKR) from Oryza sativa subsp. japonica (Rice).